The primary structure comprises 156 residues: Small ribosomal subunit protein uS7 (156 aa).

The protein belongs to the universal ribosomal protein uS7 family. Part of the 30S ribosomal subunit. Contacts proteins S9 and S11.

In terms of biological role, one of the primary rRNA binding proteins, it binds directly to 16S rRNA where it nucleates assembly of the head domain of the 30S subunit. Is located at the subunit interface close to the decoding center, probably blocks exit of the E-site tRNA. The sequence is that of Small ribosomal subunit protein uS7 from Myxococcus xanthus (strain DK1622).